Here is a 255-residue protein sequence, read N- to C-terminus: Small ribosomal subunit protein eS1 (255 aa).

Positions 1-18 are enriched in basic residues; it reads MAVGKNKRLSKGKKGLKK. Residues 1-20 are disordered; that stretch reads MAVGKNKRLSKGKKGLKKRV. Position 2 is an N-acetylalanine; partial (alanine 2).

This sequence belongs to the eukaryotic ribosomal protein eS1 family. Component of the small ribosomal subunit. Mature ribosomes consist of a small (40S) and a large (60S) subunit. The 40S subunit contains about 33 different proteins and 1 molecule of RNA (18S). The 60S subunit contains about 49 different proteins and 3 molecules of RNA (25S, 5.8S and 5S).

It localises to the cytoplasm. The chain is Small ribosomal subunit protein eS1 from Coccidioides immitis (strain RS) (Valley fever fungus).